We begin with the raw amino-acid sequence, 552 residues long: Chromosomal replication initiator protein DnaA (552 aa).

The segment at M1–T90 is domain I, interacts with DnaA modulators. Residues T90–G210 form a domain II region. The segment at E113–N213 is disordered. A compositionally biased stretch (low complexity) spans P155–Q170. Positions S211–A427 are domain III, AAA+ region. ATP is bound by residues G255, G257, K258, and T259. The interval S428–A552 is domain IV, binds dsDNA.

It belongs to the DnaA family. In terms of assembly, oligomerizes as a right-handed, spiral filament on DNA at oriC.

Its subcellular location is the cytoplasm. In terms of biological role, plays an essential role in the initiation and regulation of chromosomal replication. ATP-DnaA binds to the origin of replication (oriC) to initiate formation of the DNA replication initiation complex once per cell cycle. Binds the DnaA box (a 9 base pair repeat at the origin) and separates the double-stranded (ds)DNA. Forms a right-handed helical filament on oriC DNA; dsDNA binds to the exterior of the filament while single-stranded (ss)DNA is stabiized in the filament's interior. The ATP-DnaA-oriC complex binds and stabilizes one strand of the AT-rich DNA unwinding element (DUE), permitting loading of DNA polymerase. After initiation quickly degrades to an ADP-DnaA complex that is not apt for DNA replication. Binds acidic phospholipids. This Corynebacterium diphtheriae (strain ATCC 700971 / NCTC 13129 / Biotype gravis) protein is Chromosomal replication initiator protein DnaA.